The following is a 55-amino-acid chain: Large ribosomal subunit protein bL33 (55 aa).

This sequence belongs to the bacterial ribosomal protein bL33 family.

The protein is Large ribosomal subunit protein bL33 of Rhodospirillum centenum (strain ATCC 51521 / SW).